Reading from the N-terminus, the 1109-residue chain is DNA-directed RNA polymerase subunit beta (1109 aa).

The protein belongs to the RNA polymerase beta chain family. As to quaternary structure, in plastids the minimal PEP RNA polymerase catalytic core is composed of four subunits: alpha, beta, beta', and beta''. When a (nuclear-encoded) sigma factor is associated with the core the holoenzyme is formed, which can initiate transcription.

The protein localises to the plastid. It localises to the chloroplast. The enzyme catalyses RNA(n) + a ribonucleoside 5'-triphosphate = RNA(n+1) + diphosphate. Functionally, DNA-dependent RNA polymerase catalyzes the transcription of DNA into RNA using the four ribonucleoside triphosphates as substrates. The polypeptide is DNA-directed RNA polymerase subunit beta (Nephroselmis olivacea (Green alga)).